Consider the following 60-residue polypeptide: ADQLARLRAEFQANRYLTEERRQNLARELSLNEAQIKIWFQNKRAKIKKASGVKNTLALY.

A DNA-binding region (homeobox) is located at residues 1 to 41; the sequence is ADQLARLRAEFQANRYLTEERRQNLARELSLNEAQIKIWFQ.

Belongs to the engrailed homeobox family.

The protein localises to the nucleus. This is Homeobox protein engrailed-like A from Myxine glutinosa (Atlantic hagfish).